A 344-amino-acid polypeptide reads, in one-letter code: MTTTLTLIRPDDWHLHVRDGAALAAVVPHTARQFARAIIMPNLRPPVTTAAQAVAYRERIAAAVPAGVDFTPLMTLYLTDNTPADEIVRAQAAGVVALKLYPAGATTNSDAGVTDVRKTYAALEAMQRAGMPLLVHGEVTDPAVDVFDREAVFIDQVMRPLRRDFPELKVVFEHITTQEAADYVAEADAHTAATITAHHLLYNRNAIFTGGLRPHYYCLPVLKREVHRLALVKAATSGSSKFFLGTDSAPHPAHLKEHAAACAGCYTALSAIELYAQAFDDAGALDKLEGFASLHGPDFYGLPRNSGTLTLRREPWQLPETLAFGDAQLKPLCGGETLDWRLLA.

Zn(2+) is bound by residues His-14 and His-16. Residues 16–18 and Asn-42 contribute to the substrate site; that span reads HVR. Zn(2+) is bound by residues Lys-99, His-136, and His-174. Lys-99 carries the post-translational modification N6-carboxylysine. His-136 lines the substrate pocket. Leu-219 serves as a coordination point for substrate. Asp-247 lines the Zn(2+) pocket. Asp-247 is a catalytic residue. His-251 and Ala-263 together coordinate substrate.

This sequence belongs to the metallo-dependent hydrolases superfamily. DHOase family. Class II DHOase subfamily. In terms of assembly, homodimer. Zn(2+) serves as cofactor.

The catalysed reaction is (S)-dihydroorotate + H2O = N-carbamoyl-L-aspartate + H(+). Its pathway is pyrimidine metabolism; UMP biosynthesis via de novo pathway; (S)-dihydroorotate from bicarbonate: step 3/3. Functionally, catalyzes the reversible cyclization of carbamoyl aspartate to dihydroorotate. In Leptothrix cholodnii (strain ATCC 51168 / LMG 8142 / SP-6) (Leptothrix discophora (strain SP-6)), this protein is Dihydroorotase.